The following is a 211-amino-acid chain: Urease accessory protein UreG (211 aa).

11 to 18 (GPVGAGKT) is a GTP binding site.

Belongs to the SIMIBI class G3E GTPase family. UreG subfamily. As to quaternary structure, homodimer. UreD, UreF and UreG form a complex that acts as a GTP-hydrolysis-dependent molecular chaperone, activating the urease apoprotein by helping to assemble the nickel containing metallocenter of UreC. The UreE protein probably delivers the nickel.

Its subcellular location is the cytoplasm. Functionally, facilitates the functional incorporation of the urease nickel metallocenter. This process requires GTP hydrolysis, probably effectuated by UreG. The sequence is that of Urease accessory protein UreG from Actinobacillus pleuropneumoniae serotype 3 (strain JL03).